A 162-amino-acid polypeptide reads, in one-letter code: Putative 4-hydroxy-4-methyl-2-oxoglutarate aldolase (162 aa).

Substrate is bound by residues 75–78 (GDML) and R97. D98 contributes to the a divalent metal cation binding site.

Belongs to the class II aldolase/RraA-like family. As to quaternary structure, homotrimer. The cofactor is a divalent metal cation.

It carries out the reaction 4-hydroxy-4-methyl-2-oxoglutarate = 2 pyruvate. It catalyses the reaction oxaloacetate + H(+) = pyruvate + CO2. In terms of biological role, catalyzes the aldol cleavage of 4-hydroxy-4-methyl-2-oxoglutarate (HMG) into 2 molecules of pyruvate. Also contains a secondary oxaloacetate (OAA) decarboxylase activity due to the common pyruvate enolate transition state formed following C-C bond cleavage in the retro-aldol and decarboxylation reactions. In Ectopseudomonas mendocina (strain ymp) (Pseudomonas mendocina), this protein is Putative 4-hydroxy-4-methyl-2-oxoglutarate aldolase.